Reading from the N-terminus, the 503-residue chain is MLDLTYEAPKPKVIAGAKHDWELVIGMEIHAQVSSNAKLFSGASTTFGAEPNSNVSFVDCAMPGMLPVINEFCVAQAVRTGLGLKAQINLFSAFDRKNYFYPDLPQGYQISQLYHPIVGEGEVLVEMAPGIARLVRIERIHLEQDAGKSIHDMDPNLSFVDFNRTGVALMEIVSRPDIRGPEEAAAYVAKLRQILRYLGTCDGNMQNGNLRADVNVSVCRPGQYEKYQETQDFSHLGTRCEIKNMNSMRFIQQAIDYEARRQIAILEDGGKVVQETRLYDPDKGETRSMRSKEEAHDYRYFPDPDLLPLEIEQGWVDEIAASMPELPDAKKARFMADYGVTDYDANVLTAELEAAAYFEEVARGRDGKQAANWVINELFGRLNKQGLTIADTPVKAGQLGGVLDLIASGEISGKMAKDLFEILWTEGGDPAEVAAARGMKQVTDTGAIETAVDEIIAANPAQVEKAKANPKLAGWFVGQVIKATGGKANPAAVNQIVAEKLGL.

This sequence belongs to the GatB/GatE family. GatB subfamily. As to quaternary structure, heterotrimer of A, B and C subunits.

It carries out the reaction L-glutamyl-tRNA(Gln) + L-glutamine + ATP + H2O = L-glutaminyl-tRNA(Gln) + L-glutamate + ADP + phosphate + H(+). The catalysed reaction is L-aspartyl-tRNA(Asn) + L-glutamine + ATP + H2O = L-asparaginyl-tRNA(Asn) + L-glutamate + ADP + phosphate + 2 H(+). Allows the formation of correctly charged Asn-tRNA(Asn) or Gln-tRNA(Gln) through the transamidation of misacylated Asp-tRNA(Asn) or Glu-tRNA(Gln) in organisms which lack either or both of asparaginyl-tRNA or glutaminyl-tRNA synthetases. The reaction takes place in the presence of glutamine and ATP through an activated phospho-Asp-tRNA(Asn) or phospho-Glu-tRNA(Gln). This Cereibacter sphaeroides (strain KD131 / KCTC 12085) (Rhodobacter sphaeroides) protein is Aspartyl/glutamyl-tRNA(Asn/Gln) amidotransferase subunit B.